We begin with the raw amino-acid sequence, 313 residues long: Ribosomal RNA small subunit methyltransferase H (313 aa).

S-adenosyl-L-methionine-binding positions include 35-37 (GGH), D55, F81, D103, and Q110.

It belongs to the methyltransferase superfamily. RsmH family.

It localises to the cytoplasm. The enzyme catalyses cytidine(1402) in 16S rRNA + S-adenosyl-L-methionine = N(4)-methylcytidine(1402) in 16S rRNA + S-adenosyl-L-homocysteine + H(+). Specifically methylates the N4 position of cytidine in position 1402 (C1402) of 16S rRNA. The protein is Ribosomal RNA small subunit methyltransferase H of Pseudomonas syringae pv. tomato (strain ATCC BAA-871 / DC3000).